A 454-amino-acid chain; its full sequence is MVDCPRYSLSGVAASFLFVLLTIKHPDDFRVVGPNLPILAKVGEDALLTCQLLPKRTTAHMEVRWYRSDPDMPVIMYRDGAEVTGLPMEGYGGRAEWMEDSTEEGSVALKIRQVQPSDDGQYWCRFQEGDYWRETSVLLQVAALGSSPNIHVEGLGEGEVQLVCTSRGWFPEPEVHWEGIWGEKLMSFSENHVPGEDGLFYVEDTLMVRNDSVETISCFIYSHGLRETQEATIALSERLQTELASVSVIGHSQPSPVQVGENIELTCHLSPQTDAQNLEVRWLRSRYYPAVHVYANGTHVAGEQMVEYKGRTSLVTDAIHEGKLTLQIHNARTSDEGQYRCLFGKDGVYQEARVDVQVMAVGSTPRITREVLKDGGMQLRCTSDGWFPRPHVQWRDRDGKTMPSFSEAFQQGSQELFQVETLLLVTNGSMVNVTCSISLPLGQEKTARFPLSGW.

The Cytoplasmic segment spans residues 1–6 (MVDCPR). Residues 7–23 (YSLSGVAASFLFVLLTI) form a helical; Signal-anchor for type II membrane protein membrane-spanning segment. At 24–454 (KHPDDFRVVG…KTARFPLSGW (431 aa)) the chain is on the extracellular side. Ig-like V-type domains follow at residues 27–140 (DDFR…VLLQ), 148–234 (PNIH…ATIA), 244–355 (ASVS…ARVD), and 365–452 (PRIT…FPLS). Intrachain disulfides connect Cys50/Cys124, Cys164/Cys218, Cys267/Cys341, and Cys381/Cys435. N-linked (GlcNAc...) asparagine glycosylation is found at Asn210, Asn296, Asn427, and Asn432.

This sequence belongs to the immunoglobulin superfamily. BTN/MOG family. Highly expressed in intestine and at reduced levels in lung and stomach. Also expressed in thymus, spleen, lymph nodes, T-cells, B-cells, and macrophages.

It localises to the membrane. Its function is as follows. Negative regulator of T-cell proliferation. The sequence is that of Butyrophilin-like protein 2 from Mus musculus (Mouse).